A 238-amino-acid chain; its full sequence is MKIFVCEDDQRQREHMVSIIKNYIMIEEKPMELALATNDPYEVLEQSKELNDIGCYFLDIQLEADMNGIKLASEIRKHDPVGNIIFVTSHSELTYLTFVYKVAAMDFIFKDDPSELKMRIIDCLETAHTRLKLLSKESNVDTIELKRGSNSVYVQYDDIMFFESSTKSHRLIAHLDNRQIEFYGNLKELAQLDERFFRCHNSFVINRHNIESIDSKERIVYFKNGENCFASVRNVKKI.

In terms of domain architecture, Response regulatory spans 2 to 125 (KIFVCEDDQR…LKMRIIDCLE (124 aa)). Aspartate 59 is subject to 4-aspartylphosphate. The HTH LytTR-type domain occupies 143–238 (IELKRGSNSV…FASVRNVKKI (96 aa)).

It localises to the cytoplasm. Required for high-level post-exponential phase expression of a series of secreted proteins. The protein is Accessory gene regulator protein A (agrA) of Staphylococcus epidermidis (strain ATCC 35984 / DSM 28319 / BCRC 17069 / CCUG 31568 / BM 3577 / RP62A).